Reading from the N-terminus, the 766-residue chain is Nucleolar complex protein 2 (766 aa).

The segment covering 1-12 (MKLATKKIKTLG) has biased composition (basic residues). Disordered regions lie at residues 1–73 (MKLA…EELE), 100–154 (DTDD…DEED), and 674–766 (KTGV…LNEW). The segment covering 14-29 (SKPDLSKKKPAKDAIR) has biased composition (basic and acidic residues). Positions 33–42 (PQTTSETKVT) are enriched in polar residues. Residues 58–67 (KTTKKGFKKS) show a composition bias toward basic residues. Positions 100–115 (DTDDDDDEEGDEEDKE) are enriched in acidic residues. Position 101 is a phosphothreonine (Thr-101). The span at 130–140 (EKYHKPSKDLE) shows a compositional bias: basic and acidic residues. Residues 141–154 (VASDESDFEVDEED) show a composition bias toward acidic residues. Phosphoserine is present on residues Ser-143, Ser-146, Ser-691, Ser-693, and Ser-705. The span at 706–720 (DDDDDEDVQEEEEVE) shows a compositional bias: acidic residues. Basic and acidic residues predominate over residues 757 to 766 (IVKDLDLNEW).

It belongs to the NOC2 family.

The protein resides in the nucleus. This is Nucleolar complex protein 2 from Drosophila melanogaster (Fruit fly).